The primary structure comprises 127 residues: MPLFGSTFSPKKTPPRKSASLSNLHNLDRSTREVELGLDYGTPTMNLAGQSLKFENGQWIAETGISGGVDRREAQRLRRRNQQLEEENNLLRLKVDILLDMLSETTAESHLMEKELDELKSVSRRRK.

Over residues 1-10 the composition is skewed to polar residues; the sequence is MPLFGSTFSP. Residues 1–26 form a disordered region; that stretch reads MPLFGSTFSPKKTPPRKSASLSNLHN. Residues serine 9 and serine 20 each carry the phosphoserine modification. The tract at residues 60-112 is minimal region for the interaction with PKD2; it reads IAETGISGGVDRREAQRLRRRNQQLEEENNLLRLKVDILLDMLSETTAESHLM. Residues 68-125 adopt a coiled-coil conformation; that stretch reads GVDRREAQRLRRRNQQLEEENNLLRLKVDILLDMLSETTAESHLMEKELDELKSVSRR. The tract at residues 77–98 is leucine-zipper; mediates homodimerization; sequence LRRRNQQLEEENNLLRLKVDIL.

It belongs to the chibby family. In terms of assembly, homodimer. Homodimerization is essential for nuclear localization and interaction with KPNA4 but is dispensable for interaction with CTNNB1. Interacts with polycystin-2/PKD2 and GM130. Interacts with the C-terminal region of CTNNB1. Interacts (C-terminus) with TCIM (C-terminus), TCIM competes with CTNNB1 for the interaction with CBY1. Interacts with FAM92A; this interaction facilitates targeting of FAM92A to cilium basal body. Interacts with CIBAR2. Interacts with KPNA4.

It localises to the nucleus speckle. It is found in the cytoplasm. The protein resides in the cytoskeleton. Its subcellular location is the cilium basal body. The protein localises to the microtubule organizing center. It localises to the centrosome. It is found in the centriole. The protein resides in the golgi apparatus. Its subcellular location is the trans-Golgi network. The protein localises to the cell projection. It localises to the cilium. It is found in the flagellum. The protein resides in the nucleus. Inhibits the Wnt/Wingless pathway by binding to CTNNB1/beta-catenin and inhibiting beta-catenin-mediated transcriptional activation through competition with TCF/LEF transcription factors. Has also been shown to play a role in regulating the intracellular trafficking of polycystin-2/PKD2 and possibly of other intracellular proteins. Promotes adipocyte and cardiomyocyte differentiation. The sequence is that of Protein chibby homolog 1 (CBY1) from Bos taurus (Bovine).